Consider the following 502-residue polypeptide: Inosine-5'-monophosphate dehydrogenase 2 (502 aa).

Serine 2 is subject to N-acetylserine. The 60-residue stretch at 166–225 folds into the CBS domain; it reads MKSCENKDYYVPWDIDLDKIEAVLEDKQKGFVVLEKEGETVNVVTKDDVERVKGYPKLGS. Residues 264 to 266 and 314 to 316 contribute to the NAD(+) site; these read DSS and GMG. K(+) is bound by residues glycine 316 and glycine 318. Position 319 (serine 319) interacts with IMP. Position 321 (cysteine 321) interacts with K(+). Residue cysteine 321 is the Thioimidate intermediate of the active site. IMP is bound by residues 354-356, 377-378, and 401-405; these read DGG, GS, and YRGMG. The active-site Proton acceptor is the arginine 417. Glutamine 429 serves as a coordination point for IMP. 3 residues coordinate K(+): glutamate 488, glycine 489, and glycine 490.

It belongs to the IMPDH/GMPR family. In terms of assembly, homotetramer. The cofactor is K(+).

The protein localises to the cytoplasm. It catalyses the reaction IMP + NAD(+) + H2O = XMP + NADH + H(+). Its pathway is purine metabolism; XMP biosynthesis via de novo pathway; XMP from IMP: step 1/1. Its activity is regulated as follows. Mycophenolic acid (MPA) is a non-competitive inhibitor that prevents formation of the closed enzyme conformation by binding to the same site as the amobile flap. In contrast, mizoribine monophosphate (MZP) is a competitive inhibitor that induces the closed conformation. MPA is a potent inhibitor of mammalian IMPDHs but a poor inhibitor of the bacterial enzymes. MZP is a more potent inhibitor of bacterial IMPDH. Its function is as follows. Catalyzes the conversion of inosine 5'-phosphate (IMP) to xanthosine 5'-phosphate (XMP), the first committed and rate-limiting step in the de novo synthesis of guanine nucleotides, and therefore plays an important role in the regulation of cell growth. The protein is Inosine-5'-monophosphate dehydrogenase 2 of Arabidopsis thaliana (Mouse-ear cress).